Reading from the N-terminus, the 255-residue chain is Imidazole glycerol phosphate synthase subunit HisF (255 aa).

Residues Asp12 and Asp131 contribute to the active site.

This sequence belongs to the HisA/HisF family. In terms of assembly, heterodimer of HisH and HisF.

It is found in the cytoplasm. The catalysed reaction is 5-[(5-phospho-1-deoxy-D-ribulos-1-ylimino)methylamino]-1-(5-phospho-beta-D-ribosyl)imidazole-4-carboxamide + L-glutamine = D-erythro-1-(imidazol-4-yl)glycerol 3-phosphate + 5-amino-1-(5-phospho-beta-D-ribosyl)imidazole-4-carboxamide + L-glutamate + H(+). The protein operates within amino-acid biosynthesis; L-histidine biosynthesis; L-histidine from 5-phospho-alpha-D-ribose 1-diphosphate: step 5/9. Its function is as follows. IGPS catalyzes the conversion of PRFAR and glutamine to IGP, AICAR and glutamate. The HisF subunit catalyzes the cyclization activity that produces IGP and AICAR from PRFAR using the ammonia provided by the HisH subunit. The polypeptide is Imidazole glycerol phosphate synthase subunit HisF (Neisseria meningitidis serogroup C (strain 053442)).